The following is a 499-amino-acid chain: Probable cytosol aminopeptidase (499 aa).

The Mn(2+) site is built by lysine 267 and aspartate 272. Residue lysine 279 is part of the active site. The Mn(2+) site is built by aspartate 290, aspartate 349, and glutamate 351. Arginine 353 is an active-site residue.

Belongs to the peptidase M17 family. Mn(2+) is required as a cofactor.

It localises to the cytoplasm. It carries out the reaction Release of an N-terminal amino acid, Xaa-|-Yaa-, in which Xaa is preferably Leu, but may be other amino acids including Pro although not Arg or Lys, and Yaa may be Pro. Amino acid amides and methyl esters are also readily hydrolyzed, but rates on arylamides are exceedingly low.. The enzyme catalyses Release of an N-terminal amino acid, preferentially leucine, but not glutamic or aspartic acids.. In terms of biological role, presumably involved in the processing and regular turnover of intracellular proteins. Catalyzes the removal of unsubstituted N-terminal amino acids from various peptides. In Buchnera aphidicola subsp. Acyrthosiphon pisum (strain 5A), this protein is Probable cytosol aminopeptidase.